A 229-amino-acid chain; its full sequence is Demethylmenaquinone methyltransferase (229 aa).

Residues Thr-57, Asp-77, and Asp-101–Val-102 contribute to the S-adenosyl-L-methionine site.

Belongs to the class I-like SAM-binding methyltransferase superfamily. MenG/UbiE family.

It catalyses the reaction a 2-demethylmenaquinol + S-adenosyl-L-methionine = a menaquinol + S-adenosyl-L-homocysteine + H(+). It participates in quinol/quinone metabolism; menaquinone biosynthesis; menaquinol from 1,4-dihydroxy-2-naphthoate: step 2/2. In terms of biological role, methyltransferase required for the conversion of demethylmenaquinol (DMKH2) to menaquinol (MKH2). This chain is Demethylmenaquinone methyltransferase, found in Chlamydia trachomatis serovar L2 (strain ATCC VR-902B / DSM 19102 / 434/Bu).